The chain runs to 229 residues: Ras-related protein rab-39 (229 aa).

Residue 73–77 (DTAGQ) participates in GTP binding. 2 S-geranylgeranyl cysteine lipidation sites follow: cysteine 227 and cysteine 229. Cysteine 229 is modified (cysteine methyl ester).

Belongs to the small GTPase superfamily. Rab family. As to quaternary structure, interacts (in GTP-bound form) with Ras association domain-containing protein rsf-1.

The protein localises to the cell membrane. It localises to the cytoplasmic vesicle membrane. Its subcellular location is the golgi apparatus. Small GTPases Rab involved in autophagy. The small GTPases Rab are key regulators of intracellular membrane trafficking, from the formation of transport vesicles to their fusion with membranes. Rabs cycle between an inactive GDP-bound form and an active GTP-bound form that is able to recruit to membranes different sets of downstream effectors directly responsible for vesicle formation, movement, tethering and fusion. Involved in positively regulating the oxidative stress response, perhaps in concert with the Ras association domain-containing protein rsf-1. In Caenorhabditis elegans, this protein is Ras-related protein rab-39.